A 282-amino-acid chain; its full sequence is 3-methyl-2-oxobutanoate hydroxymethyltransferase (282 aa).

Positions 45 and 84 each coordinate Mg(2+). 3-methyl-2-oxobutanoate-binding positions include 45 to 46 (DS), Asp84, and Lys114. Glu116 contributes to the Mg(2+) binding site. The Proton acceptor role is filled by Glu183.

The protein belongs to the PanB family. As to quaternary structure, homodecamer; pentamer of dimers. The cofactor is Mg(2+).

The protein localises to the cytoplasm. It carries out the reaction 3-methyl-2-oxobutanoate + (6R)-5,10-methylene-5,6,7,8-tetrahydrofolate + H2O = 2-dehydropantoate + (6S)-5,6,7,8-tetrahydrofolate. It participates in cofactor biosynthesis; (R)-pantothenate biosynthesis; (R)-pantoate from 3-methyl-2-oxobutanoate: step 1/2. Its function is as follows. Catalyzes the reversible reaction in which hydroxymethyl group from 5,10-methylenetetrahydrofolate is transferred onto alpha-ketoisovalerate to form ketopantoate. The protein is 3-methyl-2-oxobutanoate hydroxymethyltransferase of Syntrophobacter fumaroxidans (strain DSM 10017 / MPOB).